A 95-amino-acid polypeptide reads, in one-letter code: UPF0235 protein Sama_2480 (95 aa).

The protein belongs to the UPF0235 family.

The polypeptide is UPF0235 protein Sama_2480 (Shewanella amazonensis (strain ATCC BAA-1098 / SB2B)).